The primary structure comprises 238 residues: Ribonuclease PH (238 aa).

Phosphate contacts are provided by residues Arg-86 and 124 to 126 (GTR).

The protein belongs to the RNase PH family. Homohexameric ring arranged as a trimer of dimers.

The catalysed reaction is tRNA(n+1) + phosphate = tRNA(n) + a ribonucleoside 5'-diphosphate. Functionally, phosphorolytic 3'-5' exoribonuclease that plays an important role in tRNA 3'-end maturation. Removes nucleotide residues following the 3'-CCA terminus of tRNAs; can also add nucleotides to the ends of RNA molecules by using nucleoside diphosphates as substrates, but this may not be physiologically important. Probably plays a role in initiation of 16S rRNA degradation (leading to ribosome degradation) during starvation. This chain is Ribonuclease PH, found in Histophilus somni (strain 2336) (Haemophilus somnus).